The sequence spans 118 residues: Large ribosomal subunit protein bL20 (118 aa).

This sequence belongs to the bacterial ribosomal protein bL20 family.

Functionally, binds directly to 23S ribosomal RNA and is necessary for the in vitro assembly process of the 50S ribosomal subunit. It is not involved in the protein synthesizing functions of that subunit. This Thermotoga neapolitana (strain ATCC 49049 / DSM 4359 / NBRC 107923 / NS-E) protein is Large ribosomal subunit protein bL20.